Consider the following 58-residue polypeptide: Proteinase inhibitor PSKP-1 (58 aa).

Residues 1-58 (VIEPKCYKYEGKKCPPDINPVCGTDKRTYYNECALCVFIRQSTKKADKAIKIKKWGKC) form the Kazal-like domain. Disulfide bonds link C6/C36, C14/C33, and C22/C58.

In terms of assembly, monomer. As to expression, skin.

It is found in the secreted. Its function is as follows. Has antibacterial activity against Gram-negative bacterium E.coli ATCC 11229. Shows hemagglutinating activity. Inhibits prolyl endopeptidase, but not trypsin, chymotrypsin, V8 protease and proteinase K. May have a role in mucosal defense against microbes by interacting directly with their membranes. The polypeptide is Proteinase inhibitor PSKP-1 (Phyllomedusa sauvagei (Sauvage's leaf frog)).